The chain runs to 208 residues: Uracil phosphoribosyltransferase (208 aa).

5-phospho-alpha-D-ribose 1-diphosphate-binding positions include Arg78, Arg103, and 130-138 (DPMLATGGT). Uracil-binding positions include Ile193 and 198-200 (GDA). Asp199 lines the 5-phospho-alpha-D-ribose 1-diphosphate pocket.

The protein belongs to the UPRTase family. Mg(2+) is required as a cofactor.

The enzyme catalyses UMP + diphosphate = 5-phospho-alpha-D-ribose 1-diphosphate + uracil. It functions in the pathway pyrimidine metabolism; UMP biosynthesis via salvage pathway; UMP from uracil: step 1/1. With respect to regulation, allosterically activated by GTP. In terms of biological role, catalyzes the conversion of uracil and 5-phospho-alpha-D-ribose 1-diphosphate (PRPP) to UMP and diphosphate. The protein is Uracil phosphoribosyltransferase of Desulfotalea psychrophila (strain LSv54 / DSM 12343).